Reading from the N-terminus, the 404-residue chain is Ubiquitin-like modifier-activating enzyme 5 (404 aa).

The ATP site is built by Gly83, Asp104, Lys127, Asn150, and Asn184. Residues Cys226 and Cys229 each contribute to the Zn(2+) site. Residue Cys250 is the Glycyl thioester intermediate of the active site. Residues Cys303 and Cys308 each contribute to the Zn(2+) site. The segment at 372–393 (APEKSSETSEETVTAATADETS) is disordered. A compositionally biased stretch (low complexity) spans 382-391 (ETVTAATADE).

This sequence belongs to the ubiquitin-activating E1 family. UBA5 subfamily.

Its function is as follows. E1-like enzyme which activates UFM1. The chain is Ubiquitin-like modifier-activating enzyme 5 from Drosophila sechellia (Fruit fly).